The chain runs to 335 residues: Holliday junction branch migration complex subunit RuvB (335 aa).

A large ATPase domain (RuvB-L) region spans residues 1–181 (MDRIVEIEKY…FGMQFRLEFY (181 aa)). Residues leucine 20, arginine 21, glycine 62, lysine 65, threonine 66, threonine 67, 128–130 (EDY), arginine 171, tyrosine 181, and arginine 218 each bind ATP. Threonine 66 serves as a coordination point for Mg(2+). A small ATPAse domain (RuvB-S) region spans residues 182–252 (KDSELALILQ…RANEALNSLG (71 aa)). The tract at residues 255-335 (ELGFDAMDLR…LNYEKTLFEE (81 aa)) is head domain (RuvB-H). Positions 309 and 314 each coordinate DNA.

This sequence belongs to the RuvB family. Homohexamer. Forms an RuvA(8)-RuvB(12)-Holliday junction (HJ) complex. HJ DNA is sandwiched between 2 RuvA tetramers; dsDNA enters through RuvA and exits via RuvB. An RuvB hexamer assembles on each DNA strand where it exits the tetramer. Each RuvB hexamer is contacted by two RuvA subunits (via domain III) on 2 adjacent RuvB subunits; this complex drives branch migration. In the full resolvosome a probable DNA-RuvA(4)-RuvB(12)-RuvC(2) complex forms which resolves the HJ.

The protein localises to the cytoplasm. The enzyme catalyses ATP + H2O = ADP + phosphate + H(+). In terms of biological role, the RuvA-RuvB-RuvC complex processes Holliday junction (HJ) DNA during genetic recombination and DNA repair, while the RuvA-RuvB complex plays an important role in the rescue of blocked DNA replication forks via replication fork reversal (RFR). RuvA specifically binds to HJ cruciform DNA, conferring on it an open structure. The RuvB hexamer acts as an ATP-dependent pump, pulling dsDNA into and through the RuvAB complex. RuvB forms 2 homohexamers on either side of HJ DNA bound by 1 or 2 RuvA tetramers; 4 subunits per hexamer contact DNA at a time. Coordinated motions by a converter formed by DNA-disengaged RuvB subunits stimulates ATP hydrolysis and nucleotide exchange. Immobilization of the converter enables RuvB to convert the ATP-contained energy into a lever motion, pulling 2 nucleotides of DNA out of the RuvA tetramer per ATP hydrolyzed, thus driving DNA branch migration. The RuvB motors rotate together with the DNA substrate, which together with the progressing nucleotide cycle form the mechanistic basis for DNA recombination by continuous HJ branch migration. Branch migration allows RuvC to scan DNA until it finds its consensus sequence, where it cleaves and resolves cruciform DNA. The polypeptide is Holliday junction branch migration complex subunit RuvB (Campylobacter jejuni subsp. doylei (strain ATCC BAA-1458 / RM4099 / 269.97)).